The chain runs to 305 residues: Acetylglutamate kinase (305 aa).

Substrate contacts are provided by residues 67 to 68 (GG), Arg-89, and Asn-190.

It belongs to the acetylglutamate kinase family. ArgB subfamily.

Its subcellular location is the cytoplasm. It carries out the reaction N-acetyl-L-glutamate + ATP = N-acetyl-L-glutamyl 5-phosphate + ADP. Its pathway is amino-acid biosynthesis; L-arginine biosynthesis; N(2)-acetyl-L-ornithine from L-glutamate: step 2/4. Functionally, catalyzes the ATP-dependent phosphorylation of N-acetyl-L-glutamate. In Bifidobacterium animalis subsp. lactis (strain AD011), this protein is Acetylglutamate kinase.